Here is a 375-residue protein sequence, read N- to C-terminus: Trans-enoyl reductase iccB (375 aa).

48-51 lines the NADP(+) pocket; sequence VDAK. Residue 143–150 coordinates substrate; that stretch reads AAVATVGL. NADP(+) is bound by residues 204 to 207, tyrosine 222, and 269 to 270; these read SSAS and LD. 289-293 lines the substrate pocket; the sequence is TYSQF. Residue 358-359 participates in NADP(+) binding; the sequence is IK.

Belongs to the zinc-containing alcohol dehydrogenase family. As to quaternary structure, monomer.

It catalyses the reaction N-[(4E,6E,10S,12Z,14E)-6,10-dimethyl-3-oxohexadeca-4,6,12,14-tetraenoyl]-L-tyrosyl-[ACP] = (3E,5S)-3-[(2E,4E,8S,10E,12Z)-1-hydroxy-4,8-dimethyltetradeca-2,4,10,12-tetraen-1-ylidene]-5-[(4-hydroxyphenyl)methyl]pyrrolidine-2,4-dione + holo-[ACP] + H(+). It functions in the pathway mycotoxin biosynthesis. In terms of biological role, trans-enoyl reductase; part of the gene cluster that mediates the biosynthesis of ilicicolin H, a 4-hydroxy-2-pyridonealkaloid that has potent and broad antifungal activities by inhibiting the mitochondrial respiration chain. IccB collaborates with the hybrid PKS-NRPS synthetase iccA to assemble the backbone of ilicicolin H. The PKS portion of iccA and trans-acting enoyl reductase iccB work together to construct an octaketide, and two methyl groups are introduced by the MT domain of iccA during the chain assembly. The nascent chain is then condensed with tyrosine, catalyzed by the iliA C domain, and the resulting PKS-NRPS hybrid is offloaded by the iliA RED domain to form an advanced tetramic acid intermediate. The biosynthesis of ilicicolin H starts with formation of the tetramic acid by the hybrid PKS-NRPS synthetase iccA with the partnering trans-enoyl reductase iccB since iccA lacks a designated enoylreductase (ER) domain. The cytochrome P450 monooxygenase iccC then catalyzes the ring expansion of the tetramate to the acyclic 2-pyridone. The pericyclase iccD further converts the acyclic 2-pyridone into 8-epi-ilicicolin H. Finally, the epimerase iccE converts 8-epi-ilicicolin H into ilicicolin H via epimerization. IccA to iccE are sufficient for ilicicolin H biosynthesis and the roles of the remaining enzymes, iccF, iccG and iccH within the pathway have still to be determined. This Talaromyces variabilis (Penicillium variabile) protein is Trans-enoyl reductase iccB.